Here is a 785-residue protein sequence, read N- to C-terminus: Transcription factor Sp1 (785 aa).

The disordered stretch occupies residues 1–93 (MSDQDHSMDE…PSQSGGTGEL (93 aa)). N-acetylserine is present on serine 2. Residues serine 2 and serine 7 each carry the phosphoserine modification. Residues 2 to 82 (SDQDHSMDEM…SPNENSNNSQ (81 aa)) form a repressor domain region. A Glycyl lysine isopeptide (Lys-Gly) (interchain with G-Cter in SUMO); alternate cross-link involves residue lysine 16. A Glycyl lysine isopeptide (Lys-Gly) (interchain with G-Cter in SUMO2); alternate cross-link involves residue lysine 16. Over residues 20–34 (GVGGNNGGNGNGGGA) the composition is skewed to gly residues. A Phosphoserine modification is found at serine 59. The span at 72–85 (ESPNENSNNSQGPS) shows a compositional bias: low complexity. At serine 101 the chain carries Phosphoserine; by ATM. Residues 109–123 (IISSSSGATPTSKEQ) are compositionally biased toward polar residues. The interval 109 to 141 (IISSSSGATPTSKEQSGSSTNGSNGSESSKNRT) is disordered. A compositionally biased stretch (low complexity) spans 124 to 136 (SGSSTNGSNGSES). Residues 146-251 (QYVVAAAPNL…ANNVLSGQTQ (106 aa)) form a transactivation domain A (Gln-rich) region. Residues 261–495 (NGNITLLPVN…PMQGVSLGQT (235 aa)) are transactivation domain B (Gln-rich). The residue at position 278 (threonine 278) is a Phosphothreonine; by MAPK8. Residues 329-395 (TTTTTSNMGI…KEGEQNQQTQ (67 aa)) form a disordered region. The span at 342-357 (TTSGSSGTNSQGQTPQ) shows a compositional bias: low complexity. Over residues 358–379 (RVSGLQGSDALNIQQNQTSGGS) the composition is skewed to polar residues. Low complexity predominate over residues 381–395 (QAGQQKEGEQNQQTQ). At threonine 453 the chain carries Phosphothreonine; by MAPK1 and MAPK3. Residues 462–470 (VSWQTLQLQ) carry the 9aaTAD motif. O-linked (GlcNAc) serine glycosylation occurs at serine 491. The tract at residues 496–610 (SSSNTTLTPI…REACTCPYCK (115 aa)) is transactivation domain C (highly charged). The segment at 567–598 (LHGAGGDGIHDDTAGGEEGENSPDAQPQAGRR) is disordered. Position 612 is a phosphoserine; alternate (serine 612). Serine 612 is a glycosylation site (O-linked (GlcNAc) serine; alternate). A VZV IE62-binding region spans residues 619-785 (DPGKKKQHIC…QSINISGNGF (167 aa)). Residues 626 to 650 (HICHIQGCGKVYGKTSHLRAHLRWH) form a C2H2-type 1 zinc finger. Threonine 640 is modified (phosphothreonine; alternate). Residue threonine 640 is glycosylated (O-linked (GlcNAc) threonine; alternate). Serine 641 carries O-linked (GlcNAc) serine; alternate glycosylation. Serine 641 bears the Phosphoserine; by PKC/PRKCZ; alternate mark. Threonine 651 is modified (phosphothreonine; by PKC/PRKCZ). The segment at 656 to 680 (FMCTWSYCGKRFTRSDELQRHKRTH) adopts a C2H2-type 2 zinc-finger fold. A Phosphothreonine modification is found at threonine 668. Serine 670 bears the Phosphoserine; by PKC/PRKCZ mark. Phosphothreonine; by PKC/PRKCZ is present on threonine 681. The segment at 686-708 (FACPECPKRFMRSDHLSKHIKTH) adopts a C2H2-type 3 zinc-finger fold. Phosphoserine; alternate is present on residues serine 698 and serine 702. O-linked (GlcNAc) serine; alternate glycans are attached at residues serine 698 and serine 702. Lysine 703 bears the N6-acetyllysine mark. The domain D stretch occupies residues 708 to 785 (HQNKKGGPGV…QSINISGNGF (78 aa)). Phosphothreonine; by MAPK1, MAPK3 and MAPK8 is present on threonine 739.

Belongs to the Sp1 C2H2-type zinc-finger protein family. In terms of assembly, interacts with ATF7IP, ATF7IP2, BAHD1, POGZ, HCFC1, AATF and PHC2. Interacts with HLTF; the interaction may be required for basal transcriptional activity of HLTF. Interacts (deacetylated form) with EP300; the interaction enhances gene expression. Interacts with HDAC1 and JUN. Interacts with ELF1; the interaction is inhibited by glycosylation of SP1. Interaction with NFYA; the interaction is inhibited by glycosylation of SP1. Interacts with ATF7IP and TBP. Interacts with MEIS2 isoform 4 and PBX1 isoform PBX1a. Interacts with EGR1. Interacts with SMARCA4/BRG1. Interacts with RNF112 in an oxidative stress-regulated manner. Interacts with ZBTB7A; ZBTB7A prevents the binding to GC-rich motifs in promoters and represses the transcriptional activity of SP1. Interacts with DDX3X; this interaction potentiates SP1-induced CDKN1A/WAF1/CIP1 transcription. Interacts with MSX1; the interaction may inhibit MSX1 autoinactivation. (Microbial infection) Interacts with varicella-zoster virus IE62 protein. As to quaternary structure, (Microbial infection) Interacts with SV40 VP2/3 proteins. Interacts with SV40 major capsid protein VP1; this interaction leads to a cooperativity between the 2 proteins in DNA binding. In terms of assembly, (Microbial infection) Interacts with HIV-1 Vpr; the interaction is inhibited by SP1 O-glycosylation. Post-translationally, phosphorylated on multiple serine and threonine residues. Phosphorylation is coupled to ubiquitination, sumoylation and proteolytic processing. Phosphorylation on Ser-59 enhances proteolytic cleavage. Phosphorylation on Ser-7 enhances ubiquitination and protein degradation. Hyperphosphorylation on Ser-101 in response to DNA damage has no effect on transcriptional activity. MAPK1/MAPK3-mediated phosphorylation on Thr-453 and Thr-739 enhances VEGF transcription but, represses FGF2-triggered PDGFR-alpha transcription. Also implicated in the repression of RECK by ERBB2. Hyperphosphorylated on Thr-278 and Thr-739 during mitosis by MAPK8 shielding SP1 from degradation by the ubiquitin-dependent pathway. Phosphorylated in the zinc-finger domain by calmodulin-activated PKCzeta. Phosphorylation on Ser-641 by PKCzeta is critical for TSA-activated LHR gene expression through release of its repressor, p107. Phosphorylation on Thr-668, Ser-670 and Thr-681 is stimulated by angiotensin II via the AT1 receptor inducing increased binding to the PDGF-D promoter. This phosphorylation is increased in injured artey wall. Ser-59 and Thr-681 can both be dephosphorylated by PP2A during cell-cycle interphase. Dephosphorylation on Ser-59 leads to increased chromatin association during interphase and increases the transcriptional activity. On insulin stimulation, sequentially glycosylated and phosphorylated on several C-terminal serine and threonine residues. Acetylated. Acetylation/deacetylation events affect transcriptional activity. Deacetylation leads to an increase in the expression of the 12(s)-lipooxygenase gene through recruitment of p300 to the promoter. Deacetylated by HDAC6 which leads to increased expression of ENG and positive regulation of angiogenesis. In terms of processing, ubiquitinated. Ubiquitination occurs on the C-terminal proteolytically-cleaved peptide and is triggered by phosphorylation. Post-translationally, sumoylated with SUMO1. Sumoylation modulates proteolytic cleavage of the N-terminal repressor domain. Sumoylation levels are attenuated during tumorigenesis. Phosphorylation mediates SP1 desumoylation. Proteolytic cleavage in the N-terminal repressor domain is prevented by sumoylation. The C-terminal cleaved product is susceptible to degradation. In terms of processing, O-glycosylated; Contains 8 N-acetylglucosamine side chains. Levels are controlled by insulin and the SP1 phosphorylation states. Insulin-mediated O-glycosylation locates SP1 to the nucleus, where it is sequentially deglycosylated and phosphorylated. O-glycosylation affects transcriptional activity through disrupting the interaction with a number of transcription factors including ELF1 and NFYA. Also inhibits interaction with the HIV1 promoter. Inhibited by peroxisomome proliferator receptor gamma (PPARgamma). As to expression, up-regulated in adenocarcinomas of the stomach (at protein level). Isoform 3 is ubiquitously expressed at low levels.

It is found in the nucleus. Its subcellular location is the cytoplasm. Transcription factor that can activate or repress transcription in response to physiological and pathological stimuli. Binds with high affinity to GC-rich motifs and regulates the expression of a large number of genes involved in a variety of processes such as cell growth, apoptosis, differentiation and immune responses. Highly regulated by post-translational modifications (phosphorylations, sumoylation, proteolytic cleavage, glycosylation and acetylation). Also binds the PDGFR-alpha G-box promoter. May have a role in modulating the cellular response to DNA damage. Implicated in chromatin remodeling. Plays an essential role in the regulation of FE65 gene expression. In complex with ATF7IP, maintains telomerase activity in cancer cells by inducing TERT and TERC gene expression. Isoform 3 is a stronger activator of transcription than isoform 1. Positively regulates the transcription of the core clock component BMAL1. Plays a role in the recruitment of SMARCA4/BRG1 on the c-FOS promoter. Plays a role in protecting cells against oxidative stress following brain injury by regulating the expression of RNF112. This is Transcription factor Sp1 (SP1) from Homo sapiens (Human).